An 87-amino-acid polypeptide reads, in one-letter code: MKTILIFLVVISLMYSGEAQEVAHTYCGRHLADTLADLCFGVEKRSGAQYAPYFWTRQYLGSRGKRSVVDECCFRPCTLDVLLSYCD.

A signal peptide spans 1 to 19; the sequence is MKTILIFLVVISLMYSGEA. Disulfide bonds link Cys-27/Cys-73, Cys-39/Cys-86, and Cys-72/Cys-77. Positions 46–64 are cleaved as a propeptide — bombyxin B-10 C peptide; the sequence is SGAQYAPYFWTRQYLGSRG.

The protein belongs to the insulin family. In terms of assembly, heterodimer of a B chain and an A chain linked by two disulfide bonds.

It is found in the secreted. Functionally, brain peptide responsible for activation of prothoracic glands to produce ecdysone in insects. The sequence is that of Bombyxin B-10 (BBXB10) from Bombyx mori (Silk moth).